We begin with the raw amino-acid sequence, 1527 residues long: ATP-binding cassette sub-family C member 3 (1527 aa).

Residues 1 to 32 (MDALCGSGELGSKFWDSNLSVHTENPDLTPCF) are Extracellular-facing. The N-linked (GlcNAc...) asparagine glycan is linked to asparagine 18. The helical transmembrane segment at 33–53 (QNSLLAWVPCIYLWVALPCYL) threads the bilayer. Residues 54-73 (LYLRHHCRGYIILSHLSKLK) lie on the Cytoplasmic side of the membrane. A helical membrane pass occupies residues 74–94 (MVLGVLLWCVSWADLFYSFHG). Residues 95 to 99 (LVHGR) are Extracellular-facing. Residues 100 to 120 (APAPVFFVTPLVVGVTMLLAT) traverse the membrane as a helical segment. Over 121–132 (LLIQYERLQGVQ) the chain is Cytoplasmic. Residues 133 to 153 (SSGVLIIFWFLCVVCAIVPFR) traverse the membrane as a helical segment. The Extracellular portion of the chain corresponds to 154–171 (SKILLAKAEGEISDPFRF). The chain crosses the membrane as a helical span at residues 172 to 192 (TTFYIHFALVLSALILACFRE). At 193–302 (KPPFFSAKNV…RPRKPSFLKA (110 aa)) the chain is on the cytoplasmic side. Residues 303–323 (LLATFGSSFLISACFKLIQDL) form a helical membrane-spanning segment. The ABC transmembrane type-1 1 domain maps to 311–594 (FLISACFKLI…LPQLISNLTQ (284 aa)). Topologically, residues 324–349 (LSFINPQLLSILIRFISNPMAPSWWG) are extracellular. The chain crosses the membrane as a helical span at residues 350–370 (FLVAGLMFLCSMMQSLILQHY). Over 371–426 (YHYIFVTGVKFRTGIMGVIYRKALVITNSVKRASTVGEIVNLMSVDAQRFMDLAPF) the chain is Cytoplasmic. A helical membrane pass occupies residues 427–447 (LNLLWSAPLQIILAIYFLWQN). At 448–450 (LGP) the chain is on the extracellular side. Residues 451-471 (SVLAGVAFMVLLIPLNGAVAV) form a helical membrane-spanning segment. Topologically, residues 472-533 (KMRAFQVKQM…LLRTAAYLHT (62 aa)) are cytoplasmic. The chain crosses the membrane as a helical span at residues 534-554 (TTTFTWMCSPFLVTLITLWVY). Topologically, residues 555 to 576 (VYVDPNNVLDAEKAFVSVSLFN) are extracellular. The chain crosses the membrane as a helical span at residues 577–597 (ILRLPLNMLPQLISNLTQASV). Residues 598–963 (SLKRIQQFLS…VELSVFWDYA (366 aa)) lie on the Cytoplasmic side of the membrane. Residues 629-851 (IHSGTFTWAQ…NGSFANFLCN (223 aa)) form the ABC transporter 1 domain. 661-668 (GPVGCGKS) is a binding site for ATP. Residues serine 908 and serine 911 each carry the phosphoserine modification. The tract at residues 910–932 (LSSDGEGQGRPVPRRHLGPSEKV) is disordered. The chain crosses the membrane as a helical span at residues 964 to 984 (KAVGLCTTLAICLLYVGQSAA). In terms of domain architecture, ABC transmembrane type-1 2 spans 971–1252 (TLAICLLYVG…MIRMMSDLES (282 aa)). The Extracellular segment spans residues 985 to 1021 (AIGANVWLSAWTNDAMADSRQNNTSLRLGVYAALGIL). Asparagine 1006 and asparagine 1007 each carry an N-linked (GlcNAc...) asparagine glycan. The chain crosses the membrane as a helical span at residues 1022–1042 (QGFLVMLAAMAMAAGGIQAAR). At 1043–1085 (VLHQALLHNKIRSPQSFFDTTPSGRILNCFSKDIYVVDEVLAP) the chain is on the cytoplasmic side. The chain crosses the membrane as a helical span at residues 1086 to 1106 (VILMLLNSFFNAISTLVVIMA). Position 1107 (serine 1107) is a topological domain, extracellular. A helical membrane pass occupies residues 1108-1128 (TPLFTVVILPLAVLYTLVQRF). Residues 1129-1199 (YAATSRQLKR…ISNRWLSIGV (71 aa)) lie on the Cytoplasmic side of the membrane. Residues 1200–1220 (EFVGNCVVLFAALFAVIGRSS) traverse the membrane as a helical segment. Topologically, residues 1221–1222 (LN) are extracellular. A helical transmembrane segment spans residues 1223–1243 (PGLVGLSVSYSLQVTFALNWM). Residues 1244-1527 (IRMMSDLESN…YGMARDAGLA (284 aa)) are Cytoplasmic-facing. In terms of domain architecture, ABC transporter 2 spans 1291-1523 (FRNYSVRYRP…RGIFYGMARD (233 aa)). An ATP-binding site is contributed by 1323–1330 (GRTGAGKS).

It belongs to the ABC transporter superfamily. ABCC family. Conjugate transporter (TC 3.A.1.208) subfamily. Mainly expressed in the liver. Also expressed in small intestine, colon, prostate, testis, brain and at a lower level in the kidney. In testis, localized to peritubular myoid cells, Leydig cells, along the basal membrane of Sertoli cells and moderately in the adluminal compartment of the seminiferous tubules.

It localises to the basolateral cell membrane. It is found in the basal cell membrane. It carries out the reaction taurocholate(in) + ATP + H2O = taurocholate(out) + ADP + phosphate + H(+). The enzyme catalyses glycocholate(in) + ATP + H2O = glycocholate(out) + ADP + phosphate + H(+). The catalysed reaction is taurolithocholate 3-sulfate(in) + ATP + H2O = taurolithocholate 3-sulfate(out) + ADP + phosphate + H(+). It catalyses the reaction taurochenodeoxycholate 3-sulfate(in) + ATP + H2O = taurochenodeoxycholate 3-sulfate(out) + ADP + phosphate + H(+). It carries out the reaction an S-substituted glutathione(in) + ATP + H2O = an S-substituted glutathione(out) + ADP + phosphate + H(+). The enzyme catalyses ATP + H2O + xenobioticSide 1 = ADP + phosphate + xenobioticSide 2.. The catalysed reaction is 17beta-estradiol 17-O-(beta-D-glucuronate)(in) + ATP + H2O = 17beta-estradiol 17-O-(beta-D-glucuronate)(out) + ADP + phosphate + H(+). It catalyses the reaction dehydroepiandrosterone 3-sulfate(in) + ATP + H2O = dehydroepiandrosterone 3-sulfate(out) + ADP + phosphate + H(+). It carries out the reaction leukotriene C4(in) + ATP + H2O = leukotriene C4(out) + ADP + phosphate + H(+). The enzyme catalyses (4Z,15Z)-bilirubin IXalpha C8-beta-D-glucuronoside(in) + ATP + H2O = (4Z,15Z)-bilirubin IXalpha C8-beta-D-glucuronoside(out) + ADP + phosphate + H(+). The catalysed reaction is (4Z,15Z)-bilirubin IXalpha C8,C12-beta-D-bisglucuronoside(in) + ATP + H2O = (4Z,15Z)-bilirubin IXalpha C8,C12-beta-D-bisglucuronoside(out) + ADP + phosphate + H(+). Functionally, ATP-dependent transporter of the ATP-binding cassette (ABC) family that binds and hydrolyzes ATP to enable active transport of various substrates including many drugs, toxicants and endogenous compound across cell membranes. Transports glucuronide conjugates such as bilirubin diglucuronide, estradiol-17-beta-o-glucuronide and GSH conjugates such as leukotriene C4 (LTC4). Transports also various bile salts (taurocholate, glycocholate, taurochenodeoxycholate-3-sulfate, taurolithocholate- 3-sulfate). Does not contribute substantially to bile salt physiology but provides an alternative route for the export of bile acids and glucuronides from cholestatic hepatocytes. May contribute to regulate the transport of organic compounds in testes across the blood-testis-barrier. Can confer resistance to various anticancer drugs, methotrexate, tenoposide and etoposide, by decreasing accumulation of these drugs in cells. This is ATP-binding cassette sub-family C member 3 from Homo sapiens (Human).